The primary structure comprises 318 residues: HPr kinase/phosphorylase (318 aa).

Active-site residues include H141 and K162. G156–S163 contributes to the ATP binding site. S163 is a Mg(2+) binding site. D180 acts as the Proton acceptor; for phosphorylation activity. Proton donor; for dephosphorylation activity in catalysis. Residues L204–N213 are important for the catalytic mechanism of both phosphorylation and dephosphorylation. Position 205 (E205) interacts with Mg(2+). Residue R248 is part of the active site. Residues P269 to R274 are important for the catalytic mechanism of dephosphorylation.

This sequence belongs to the HPrK/P family. Homohexamer. Mg(2+) serves as cofactor.

It catalyses the reaction [HPr protein]-L-serine + ATP = [HPr protein]-O-phospho-L-serine + ADP + H(+). It carries out the reaction [HPr protein]-O-phospho-L-serine + phosphate + H(+) = [HPr protein]-L-serine + diphosphate. Catalyzes the ATP- as well as the pyrophosphate-dependent phosphorylation of a specific serine residue in HPr, a phosphocarrier protein of the phosphoenolpyruvate-dependent sugar phosphotransferase system (PTS). HprK/P also catalyzes the pyrophosphate-producing, inorganic phosphate-dependent dephosphorylation (phosphorolysis) of seryl-phosphorylated HPr (P-Ser-HPr). This chain is HPr kinase/phosphorylase, found in Chromobacterium violaceum (strain ATCC 12472 / DSM 30191 / JCM 1249 / CCUG 213 / NBRC 12614 / NCIMB 9131 / NCTC 9757 / MK).